A 594-amino-acid polypeptide reads, in one-letter code: UvrABC system protein C (594 aa).

Residues Asp-15–Ile-92 form the GIY-YIG domain. The region spanning Ala-197–Thr-232 is the UVR domain.

Belongs to the UvrC family. Interacts with UvrB in an incision complex.

The protein resides in the cytoplasm. Functionally, the UvrABC repair system catalyzes the recognition and processing of DNA lesions. UvrC both incises the 5' and 3' sides of the lesion. The N-terminal half is responsible for the 3' incision and the C-terminal half is responsible for the 5' incision. This chain is UvrABC system protein C, found in Pediococcus pentosaceus (strain ATCC 25745 / CCUG 21536 / LMG 10740 / 183-1w).